The sequence spans 363 residues: Phospho-N-acetylmuramoyl-pentapeptide-transferase (363 aa).

10 consecutive transmembrane segments (helical) span residues 27–47, 76–96, 97–117, 137–157, 171–191, 202–222, 242–262, 265–285, 292–312, and 340–360; these read SGCA…PFIA, TMGG…WADL, TNGF…VGFA, LGCE…LTPP, VLLP…TGFG, GLAI…SYLV, LAVF…FNAP, AVFM…AVAV, VLCI…IQIF, and KIVI…LATL.

This sequence belongs to the glycosyltransferase 4 family. MraY subfamily. Mg(2+) is required as a cofactor.

It is found in the cell inner membrane. The catalysed reaction is UDP-N-acetyl-alpha-D-muramoyl-L-alanyl-gamma-D-glutamyl-meso-2,6-diaminopimeloyl-D-alanyl-D-alanine + di-trans,octa-cis-undecaprenyl phosphate = di-trans,octa-cis-undecaprenyl diphospho-N-acetyl-alpha-D-muramoyl-L-alanyl-D-glutamyl-meso-2,6-diaminopimeloyl-D-alanyl-D-alanine + UMP. It participates in cell wall biogenesis; peptidoglycan biosynthesis. In terms of biological role, catalyzes the initial step of the lipid cycle reactions in the biosynthesis of the cell wall peptidoglycan: transfers peptidoglycan precursor phospho-MurNAc-pentapeptide from UDP-MurNAc-pentapeptide onto the lipid carrier undecaprenyl phosphate, yielding undecaprenyl-pyrophosphoryl-MurNAc-pentapeptide, known as lipid I. This Gluconobacter oxydans (strain 621H) (Gluconobacter suboxydans) protein is Phospho-N-acetylmuramoyl-pentapeptide-transferase.